The primary structure comprises 511 residues: Cobyric acid synthase (511 aa).

The GATase cobBQ-type domain occupies 251 to 443; sequence LLDIAIICLP…IHGIFDNDIF (193 aa). The active-site Nucleophile is the C332. Residue H435 is part of the active site.

Belongs to the CobB/CobQ family. CobQ subfamily.

The protein operates within cofactor biosynthesis; adenosylcobalamin biosynthesis. Catalyzes amidations at positions B, D, E, and G on adenosylcobyrinic A,C-diamide. NH(2) groups are provided by glutamine, and one molecule of ATP is hydrogenolyzed for each amidation. The polypeptide is Cobyric acid synthase (Listeria innocua serovar 6a (strain ATCC BAA-680 / CLIP 11262)).